Reading from the N-terminus, the 145-residue chain is MRQTFMANESNIERKWYVIDAEGQTLGRLSSEVASILRGKNKVTYTPHVDTGDYVIIINAAKIELTGKKESDKIYYRHSNHPGGIKSVTAGELKRNNPERLLETSIKGMLPSSRLGEKQGKKLFVYGGAEHPHAAQQPENYELRG.

The protein belongs to the universal ribosomal protein uL13 family. As to quaternary structure, part of the 50S ribosomal subunit.

In terms of biological role, this protein is one of the early assembly proteins of the 50S ribosomal subunit, although it is not seen to bind rRNA by itself. It is important during the early stages of 50S assembly. This Staphylococcus haemolyticus (strain JCSC1435) protein is Large ribosomal subunit protein uL13.